The sequence spans 879 residues: MKELTSSQIRQMYLDFFKSKGHTIEPSASLVPKDDPSLLWINSGVATMKKYFSGQVVPENPRLTSSQKSIRTNDIENVGKTARHHTLFEMLGNFSVGDYFKKEAIAWAWELLTSPDWFGWDPDKLYMTVYPKDTDAKDAWEAVGVAPDHIIAVEDNFWDIGEGPSGPDSEIFYDRGEAFNNLAADDPENYPGGENERYLEVWNIVFSQFNHEPDGTYKPLPRKNIDTGMGLERVVSIFQNAKTNFETDLFMPLIEKTAALSAGKHYGANAEDDISFKVIADHARAITFAIGDGALPGNEGRGYVIRRLIRRAIVNGQKLGIEGAFLDQLVPVVGQIMQAYYPEVLEQSDYIAKVVRSEEDRFGETLTDGLNLLNSLIADLKQQGGNQIAGADAFKLYDTYGFPVELTEEYADDQGITVDEAGFKAEMQKQKDRARNARGKQKAMGLQHDLLINVKTPSEYVGYTQLATTSKLTVLVAGDELVDHVTSGTAEAMFDVTPFYAEMGGQVADKGDILDEAGHVVAHVADVQHAPNGQNLHTLTVVAPMETGATYQLKVDTIFHSKVEKNHTATHLLDKALREVFGEHTQQAGSLVEGDYLRFDFTHFGQVDPADLAKAEALVNQKIFEELPVTTVETDIESAKKMGAIALFSEKYGKVVRVVSAGDFVTEFCGGNHVKNTNEIGLFKITSESGVGAGVRRIEAVTSAAAYAYLHDHDEILNAVGADLKVTQVDEIEQKVQALQAQVKALEQQQATLEGKLASQEAGAVFDHVTTAGNYQLISGTVQVSKMDQLRALADTWRDQALSDVLVLGAEVNGKANLIVAVSADKQKQVKAGDLIKAISPKINGGGGGRPNLAQAGGKNPAGLPDAMTAAADWLAEQK.

Residues histidine 567, histidine 571, cysteine 669, and histidine 673 each coordinate Zn(2+).

It belongs to the class-II aminoacyl-tRNA synthetase family. It depends on Zn(2+) as a cofactor.

Its subcellular location is the cytoplasm. It catalyses the reaction tRNA(Ala) + L-alanine + ATP = L-alanyl-tRNA(Ala) + AMP + diphosphate. In terms of biological role, catalyzes the attachment of alanine to tRNA(Ala) in a two-step reaction: alanine is first activated by ATP to form Ala-AMP and then transferred to the acceptor end of tRNA(Ala). Also edits incorrectly charged Ser-tRNA(Ala) and Gly-tRNA(Ala) via its editing domain. The sequence is that of Alanine--tRNA ligase from Levilactobacillus brevis (strain ATCC 367 / BCRC 12310 / CIP 105137 / JCM 1170 / LMG 11437 / NCIMB 947 / NCTC 947) (Lactobacillus brevis).